The primary structure comprises 1142 residues: Probable serine/threonine-protein kinase fhkB (1142 aa).

Positions 1–16 (MSQDIQTQNSYSDELY) are enriched in polar residues. Disordered stretches follow at residues 1 to 359 (MSQD…RLSQ), 374 to 404 (NTHT…KKQQ), and 432 to 451 (QIIG…QPPV). Low complexity-rich tracts occupy residues 17–72 (SSQI…FSQN) and 83–157 (QNSY…PSSQ). Polar residues predominate over residues 158 to 178 (KRFFQSQNDDFVPSSQVTSLQ). Positions 186-302 (IQQQQQQQQQ…DYEQENDDDD (117 aa)) form a coiled coil. The span at 187-260 (QQQQQQQQQQ…QQTQQQQQQP (74 aa)) shows a compositional bias: low complexity. 2 stretches are compositionally biased toward acidic residues: residues 261–277 (QEDD…DNYE) and 283–325 (EGEE…EEES). The span at 333 to 348 (RALQSRSSQSRPLLRS) shows a compositional bias: low complexity. Residues 374–397 (NTHTNQLGQSSQQTNSPNVHFNSL) show a composition bias toward polar residues. A coiled-coil region spans residues 393-434 (HFNSLQQKKKQQQQQQQQQQQQQQQQQQQQQQQQQQQSQQII). The segment covering 432–443 (QIIGSQSSQSSQ) has biased composition (low complexity). Residues 480 to 551 (IVVGRSSSCD…NGSYINGELI (72 aa)) form the FHA domain. A Protein kinase domain is found at 625–885 (YYFVKEIGSG…IKEALNHPWF (261 aa)). ATP contacts are provided by residues 631 to 639 (IGSGGYGIV) and K654. The Proton acceptor role is filled by D747. Positions 947-1142 (FDNNNNNNNN…HQQYTQHTTM (196 aa)) are disordered. A compositionally biased stretch (low complexity) spans 949–1034 (NNNNNNNNNN…HNHNLNNHNH (86 aa)). Residues 1035–1067 (NNNHHHNHNHNHNHNHNHNHNHNHNHNHNHNHN) are compositionally biased toward basic residues. A compositionally biased stretch (low complexity) spans 1068-1133 (NHNNNNNNNN…NNINNNNNYH (66 aa)). A coiled-coil region spans residues 1090–1132 (NNNNNNNNNNNNNNNNNNNNYYNNNINNINNNINNNINNNNNY).

It belongs to the protein kinase superfamily. CAMK Ser/Thr protein kinase family. CHK2 subfamily.

The enzyme catalyses L-seryl-[protein] + ATP = O-phospho-L-seryl-[protein] + ADP + H(+). It carries out the reaction L-threonyl-[protein] + ATP = O-phospho-L-threonyl-[protein] + ADP + H(+). In Dictyostelium discoideum (Social amoeba), this protein is Probable serine/threonine-protein kinase fhkB (fhkB).